The chain runs to 328 residues: uncharacterized protein (328 aa).

Residues 1–32 (MFNFRLFSRRGKSLGLLAIVLLLFGFYSLKSS) form the signal peptide.

It belongs to the glycosyltransferase 34 family.

It localises to the endoplasmic reticulum. This is an uncharacterized protein from Schizosaccharomyces pombe (strain 972 / ATCC 24843) (Fission yeast).